Here is an 85-residue protein sequence, read N- to C-terminus: UPF0335 protein Oant_1161 (85 aa).

Belongs to the UPF0335 family.

The chain is UPF0335 protein Oant_1161 from Brucella anthropi (strain ATCC 49188 / DSM 6882 / CCUG 24695 / JCM 21032 / LMG 3331 / NBRC 15819 / NCTC 12168 / Alc 37) (Ochrobactrum anthropi).